The primary structure comprises 46 residues: Diuretic hormone (46 aa).

Residue isoleucine 46 is modified to Isoleucine amide.

It belongs to the sauvagine/corticotropin-releasing factor/urotensin I family.

It localises to the secreted. Regulation of fluid secretion. Stimulates primary urine secretion by Malpighian tubules and causes a dose-dependent stimulation of cAMP levels in the tubules. The polypeptide is Diuretic hormone (Periplaneta americana (American cockroach)).